The primary structure comprises 184 residues: MDLSSLSPAKGSVKNKKRVGRGQGSGNGTTAGKGNKGQQSRSGYKRPVSEGGQMPLYRRLPKFGFTKPNRKSVIGVNLSQIAKWIEDGRVSSEVGVEDFKQLCNASKSDYFKVLGNGELGTAVKITAHFVSKSAEEKIKQAGGEVILAERTLLEAERVRDLSTDEALLKPKAKLRKFKKQSKSS.

Residues 1–55 (MDLSSLSPAKGSVKNKKRVGRGQGSGNGTTAGKGNKGQQSRSGYKRPVSEGGQMP) form a disordered region. Gly residues predominate over residues 21 to 35 (RGQGSGNGTTAGKGN).

This sequence belongs to the universal ribosomal protein uL15 family. Part of the 50S ribosomal subunit.

Binds to the 23S rRNA. The polypeptide is Large ribosomal subunit protein uL15 (Prosthecochloris aestuarii (strain DSM 271 / SK 413)).